Consider the following 883-residue polypeptide: AP-5 complex subunit beta-1 (883 aa).

Probably part of the adaptor protein complex 5 (AP-5).

In terms of biological role, as part of AP-5, a probable fifth adaptor protein complex, it may be involved in endosomal transport. The protein is AP-5 complex subunit beta-1 (ap5b1) of Xenopus tropicalis (Western clawed frog).